The sequence spans 254 residues: tRNA (guanine-N(1)-)-methyltransferase (254 aa).

S-adenosyl-L-methionine contacts are provided by residues G113 and 133–138 (LGDFVL).

This sequence belongs to the RNA methyltransferase TrmD family. In terms of assembly, homodimer.

The protein localises to the cytoplasm. The catalysed reaction is guanosine(37) in tRNA + S-adenosyl-L-methionine = N(1)-methylguanosine(37) in tRNA + S-adenosyl-L-homocysteine + H(+). Specifically methylates guanosine-37 in various tRNAs. This Herpetosiphon aurantiacus (strain ATCC 23779 / DSM 785 / 114-95) protein is tRNA (guanine-N(1)-)-methyltransferase.